The following is a 61-amino-acid chain: MDPNCSCTTGGSCACAGSCKCKECKCTSCKKCCCSCCPVGCAKCAQGCVCKGSSEKCRCCA.

A beta region spans residues 1-29 (MDPNCSCTTGGSCACAGSCKCKECKCTSC). C5, C7, C13, C15, C19, C21, C24, C26, C29, C33, C34, C36, C37, C41, C44, C48, C50, C57, C59, and C60 together coordinate a divalent metal cation. Residues 30–61 (KKCCCSCCPVGCAKCAQGCVCKGSSEKCRCCA) are alpha.

It belongs to the metallothionein superfamily. Type 1 family. In terms of assembly, monomer.

Its function is as follows. Metallothioneins have a high content of cysteine residues that bind various heavy metals; these proteins are transcriptionally regulated by both heavy metals and glucocorticoids. In Homo sapiens (Human), this protein is Metallothionein-1B (MT1B).